The primary structure comprises 149 residues: Large ribosomal subunit protein bL9 (149 aa).

This sequence belongs to the bacterial ribosomal protein bL9 family.

Its function is as follows. Binds to the 23S rRNA. The protein is Large ribosomal subunit protein bL9 of Synechococcus sp. (strain JA-2-3B'a(2-13)) (Cyanobacteria bacterium Yellowstone B-Prime).